The chain runs to 409 residues: Lipoyl synthase, mitochondrial (409 aa).

The interval 21–41 (QQQVPPSEEPRNESGAANPPL) is disordered. Residues C125, C130, C136, C159, C163, C166, and S375 each coordinate [4Fe-4S] cluster. The Radical SAM core domain occupies 142-364 (EEGDGTATAT…EKEALDMGFL (223 aa)).

The protein belongs to the radical SAM superfamily. Lipoyl synthase family. The cofactor is [4Fe-4S] cluster.

The protein localises to the mitochondrion. The catalysed reaction is [[Fe-S] cluster scaffold protein carrying a second [4Fe-4S](2+) cluster] + N(6)-octanoyl-L-lysyl-[protein] + 2 oxidized [2Fe-2S]-[ferredoxin] + 2 S-adenosyl-L-methionine + 4 H(+) = [[Fe-S] cluster scaffold protein] + N(6)-[(R)-dihydrolipoyl]-L-lysyl-[protein] + 4 Fe(3+) + 2 hydrogen sulfide + 2 5'-deoxyadenosine + 2 L-methionine + 2 reduced [2Fe-2S]-[ferredoxin]. Its pathway is protein modification; protein lipoylation via endogenous pathway; protein N(6)-(lipoyl)lysine from octanoyl-[acyl-carrier-protein]: step 2/2. Its function is as follows. Catalyzes the radical-mediated insertion of two sulfur atoms into the C-6 and C-8 positions of the octanoyl moiety bound to the lipoyl domains of lipoate-dependent enzymes, thereby converting the octanoylated domains into lipoylated derivatives. The chain is Lipoyl synthase, mitochondrial from Trypanosoma brucei gambiense (strain MHOM/CI/86/DAL972).